Reading from the N-terminus, the 115-residue chain is Large ribosomal subunit protein P2y (115 aa).

A disordered region spans residues 63–115 (ASVPSGGGGGVAVASATSGGGGGGGASAAESKKEEKKEEKEESDDDMGFSLFE). A compositionally biased stretch (basic and acidic residues) spans 92–102 (ESKKEEKKEEK). Phosphoserine is present on S105.

It belongs to the eukaryotic ribosomal protein P1/P2 family. In terms of assembly, P1 and P2 exist as dimers at the large ribosomal subunit. In terms of processing, phosphorylated.

Its function is as follows. Plays an important role in the elongation step of protein synthesis. The protein is Large ribosomal subunit protein P2y (RPP2B) of Arabidopsis thaliana (Mouse-ear cress).